A 726-amino-acid polypeptide reads, in one-letter code: Sister chromatid cohesion protein SCC4 (726 aa).

7 TPR repeats span residues 7–40, 88–121, 132–165, 229–262, 443–477, 531–564, and 572–605; these read AEGLWGLADHHQKLGEIGKTIKCLEAICQSQISF, FQNYSLLSHCYHLLASFPPQRNLLVKALELASSV, CNFNSQLANTFIIQADFPSSLSALESGFLSASHI, RLRLCDYKNAQHHVDRLDQAMNAHSHKMQEIQQL, PTILQASECMIEMLRGQYSHSVGCYSEAAFHCIEA, ASILFAYGLLLMKQRDLQEARNRLAKGLQIAHNH, and AQYLTLLGNLALSLHDTVQAREILRSSLTLAKKL. The tract at residues 697 to 726 is disordered; that stretch reads SVGIEGPSPAPSSSRLVGLDTGKRWGKRRM.

Belongs to the SCC4/mau-2 family. Interacts with SCC2 to form the cohesin loading complex. Expressed ubiquitously.

The protein resides in the nucleus. Its subcellular location is the cytoplasm. In terms of biological role, essential protein required for cell fate determination during embryogenesis. Involved in sister chromatid cohesion. Forms a complex with SCC2, which is required for the association of the cohesin complex with chromosomes. This chain is Sister chromatid cohesion protein SCC4, found in Arabidopsis thaliana (Mouse-ear cress).